Consider the following 295-residue polypeptide: Light-independent protochlorophyllide reductase iron-sulfur ATP-binding protein (295 aa).

ATP is bound by residues 39–44 (GIGKST) and Lys68. Ser43 contributes to the Mg(2+) binding site. [4Fe-4S] cluster is bound by residues Cys124 and Cys158. 209–210 (NR) is a binding site for ATP.

Belongs to the NifH/BchL/ChlL family. As to quaternary structure, homodimer. Protochlorophyllide reductase is composed of three subunits; ChlL, ChlN and ChlB. [4Fe-4S] cluster is required as a cofactor.

The catalysed reaction is chlorophyllide a + oxidized 2[4Fe-4S]-[ferredoxin] + 2 ADP + 2 phosphate = protochlorophyllide a + reduced 2[4Fe-4S]-[ferredoxin] + 2 ATP + 2 H2O. It functions in the pathway porphyrin-containing compound metabolism; chlorophyll biosynthesis (light-independent). Functionally, component of the dark-operative protochlorophyllide reductase (DPOR) that uses Mg-ATP and reduced ferredoxin to reduce ring D of protochlorophyllide (Pchlide) to form chlorophyllide a (Chlide). This reaction is light-independent. The L component serves as a unique electron donor to the NB-component of the complex, and binds Mg-ATP. In Prochlorococcus marinus (strain AS9601), this protein is Light-independent protochlorophyllide reductase iron-sulfur ATP-binding protein.